Consider the following 326-residue polypeptide: UDP-N-acetylglucosamine transporter (326 aa).

8 helical membrane-spanning segments follow: residues 4 to 24 (NLKYLSLGILVFQTTSLVLTM), 38 to 58 (LSSTAVVVAELLKIMACILLV), 136 to 156 (LGVYQWLSLVILMTGVAFVQW), 174 to 194 (FVGLMAVLTACFSSGFAGVYF), 212 to 232 (LGFFGSIFGLMGVYVYDGELV), 244 to 264 (LTWIVVVLQALGGLVIAAVIK), 269 to 289 (ILKGFATSLSIILSTLISYFW), and 293 to 313 (FVPTSVFFLGAILVITATFLY).

The protein belongs to the nucleotide-sugar transporter family. SLC35A subfamily. Interacts with SLC35A2; the interaction is reduced in the presence of SLC35A4. Found in a complex with SLC35A2 and SLC35A4. Interacts with MGAT4B. Post-translationally, O-Glcnacylation regulates the stability of SLC35A3 and the specific complex formation with MGAT4B.

It localises to the golgi apparatus membrane. It carries out the reaction UMP(out) + UDP-N-acetyl-alpha-D-glucosamine(in) = UMP(in) + UDP-N-acetyl-alpha-D-glucosamine(out). In terms of biological role, transports diphosphate-N-acetylglucosamine (UDP-GlcNAc) from the cytosol into the lumen of the Golgi apparatus, functioning as an antiporter that exchanges UDP-N-acetyl-alpha-D-glucosamine for UMP. May supply UDP-GlcNAc as substrate for Golgi-resident glycosyltransferases that generate highly branched, multiantennary complex N-glycans and keratan sulfate. However, the exact role of SLC35A3 still needs to be elucidated, it could be a member of a catalytically more efficient multiprotein complex rather than function independently as a single transporter. The polypeptide is UDP-N-acetylglucosamine transporter (SLC35A3) (Bos taurus (Bovine)).